Consider the following 222-residue polypeptide: Riboflavin kinase (222 aa).

Positions 1-92 (MVEAEDLQSL…VRIFNPDQRG (92 aa)) are unknown. The interval 93–222 (YTLTGTVISG…DTIEVEITHD (130 aa)) is riboflavin kinase. 102 to 107 (GLGEGR) is a CDP binding site. The Mg(2+) site is built by T131 and N133. FMN contacts are provided by T188 and E196. 201–204 (CELR) contributes to the CDP binding site.

The protein belongs to the archaeal riboflavin kinase family. Mg(2+) serves as cofactor.

It carries out the reaction riboflavin + CTP = CDP + FMN + H(+). Its pathway is cofactor biosynthesis; FMN biosynthesis; FMN from riboflavin (CTP route): step 1/1. In terms of biological role, catalyzes the CTP-dependent phosphorylation of riboflavin (vitamin B2) to form flavin mononucleotide (FMN). This chain is Riboflavin kinase (ribK), found in Methanoculleus marisnigri (strain ATCC 35101 / DSM 1498 / JR1).